A 148-amino-acid chain; its full sequence is Ribosomal RNA large subunit methyltransferase H 2 (148 aa).

Residues leucine 74, glycine 106, and 125–130 (FSKMTF) each bind S-adenosyl-L-methionine.

The protein belongs to the RNA methyltransferase RlmH family. In terms of assembly, homodimer.

It localises to the cytoplasm. It carries out the reaction pseudouridine(1915) in 23S rRNA + S-adenosyl-L-methionine = N(3)-methylpseudouridine(1915) in 23S rRNA + S-adenosyl-L-homocysteine + H(+). Specifically methylates the pseudouridine at position 1915 (m3Psi1915) in 23S rRNA. This is Ribosomal RNA large subunit methyltransferase H 2 from Caldanaerobacter subterraneus subsp. tengcongensis (strain DSM 15242 / JCM 11007 / NBRC 100824 / MB4) (Thermoanaerobacter tengcongensis).